The sequence spans 629 residues: MGYNAGSYDVIVIGAGHAGCEAGLAAARMGSKTLMLTINLDMVAFMPCNPSVGGPAKGIVVREIDALGGEMGRNIDKTHIQMRMLNTGKGPAVRALRAQADKFSYQHELKKTIEETPNLTLFQGLVERLIIEDGVCKGVITQAGAEYTAKTVVITTGTFLRGEIIMGDLKYSSGPNNQQPSITLSEHLEELGFDLVRFKTGTPPRVNSNTIDYSKTEIQPGDDKPRAFSFETTKFIMDQIPCWLTYTSTETHRLIDENLHRSAMYSGMIKGTGPRYCPSIEDKVVRFNDKPRHQIFLEPEGRNTQEVYVQGLSTSLPEDVQRAMLRTIPGLENVEMMRTGYAIEYDAIVPTQLWPTLETKKIKNLYTAGQINGTSGYEEAAGQGLMAGINAACRSLGKKEVILGRADAYIGVLIDDLVTKGTNEPYRLLTSRAEYRLLLRHDNADLRLTEVGREIGLIKEDRYERFTNKKLQIEQEKERLESIFIKPRPEVQELIRSIGGSELKDGIRASDLLRRPEVTYEHIHLLVPSEVALSDEITEQVEIQTKYEGYIEKSLQQVERMKKMENKKIPVDIDYDAISSLASEARQKLKDVRPLSMGQASRISGVNPADVSILLIYIEQGKIARVSNQ.

Residues 14–19 (GAGHAG), valine 126, and serine 181 contribute to the FAD site. NAD(+) is bound at residue 273–287 (GPRYCPSIEDKVVRF). Glutamine 370 is a binding site for FAD.

It belongs to the MnmG family. Homodimer. Heterotetramer of two MnmE and two MnmG subunits. The cofactor is FAD.

The protein resides in the cytoplasm. NAD-binding protein involved in the addition of a carboxymethylaminomethyl (cmnm) group at the wobble position (U34) of certain tRNAs, forming tRNA-cmnm(5)s(2)U34. This chain is tRNA uridine 5-carboxymethylaminomethyl modification enzyme MnmG, found in Bacillus mycoides (strain KBAB4) (Bacillus weihenstephanensis).